The chain runs to 247 residues: Ras-like protein family member 11B (247 aa).

The small GTPase-like stretch occupies residues A28–T245. Residues G39 to T46, D86 to H93, and N151 to D154 each bind GTP. The interval P202 to D228 is disordered.

The protein belongs to the small GTPase superfamily. Ras family.

The catalysed reaction is GTP + H2O = GDP + phosphate + H(+). The chain is Ras-like protein family member 11B from Mus musculus (Mouse).